The chain runs to 126 residues: Lymphocyte antigen 6E (126 aa).

Residues 1–20 (MKAFLFAVLAAVLCVERAHT) form the signal peptide. A UPAR/Ly6 domain is found at 21–98 (LICFSCSDAS…CCDSFLCNIS (78 aa)). Intrachain disulfides connect cysteine 23–cysteine 48, cysteine 26–cysteine 35, cysteine 41–cysteine 69, cysteine 73–cysteine 89, and cysteine 90–cysteine 95. A glycan (N-linked (GlcNAc...) asparagine) is linked at asparagine 96. Serine 98 is lipidated: GPI-anchor amidated serine. The propeptide at 99–126 (GSSSVKASYAVLALGILVSFVYVLRARE) is removed in mature form.

In terms of tissue distribution, expressed by thymic blast cells.

Its subcellular location is the cell membrane. In Gallus gallus (Chicken), this protein is Lymphocyte antigen 6E (LY6E).